The chain runs to 294 residues: Protoheme IX farnesyltransferase (294 aa).

A run of 9 helical transmembrane segments spans residues 13 to 33 (IIFG…KGVI), 35 to 55 (YPLF…GCVF), 84 to 104 (ISLI…YAAA), 107 to 127 (LAMQ…SLYM), 132 to 152 (VYGT…GYCA), 162 to 182 (LILL…IAIF), 208 to 228 (IILY…SGYA), 229 to 249 (GYKY…MALS), and 264 to 284 (FIFS…DPHV).

The protein belongs to the UbiA prenyltransferase family. Protoheme IX farnesyltransferase subfamily.

The protein localises to the cell inner membrane. The enzyme catalyses heme b + (2E,6E)-farnesyl diphosphate + H2O = Fe(II)-heme o + diphosphate. It participates in porphyrin-containing compound metabolism; heme O biosynthesis; heme O from protoheme: step 1/1. In terms of biological role, converts heme B (protoheme IX) to heme O by substitution of the vinyl group on carbon 2 of heme B porphyrin ring with a hydroxyethyl farnesyl side group. The chain is Protoheme IX farnesyltransferase from Photorhabdus laumondii subsp. laumondii (strain DSM 15139 / CIP 105565 / TT01) (Photorhabdus luminescens subsp. laumondii).